Consider the following 347-residue polypeptide: Aspartate-semialdehyde dehydrogenase (347 aa).

NADP(+) contacts are provided by residues 10 to 13 (TGMV) and 37 to 38 (RS). Arg-108 is a phosphate binding site. The active-site Acyl-thioester intermediate is the Cys-147. Position 174 (Gln-174) interacts with substrate. Position 177-178 (177-178 (SG)) interacts with NADP(+). Substrate is bound at residue Glu-200. Phosphate is bound at residue Lys-203. Arg-233 contributes to the substrate binding site. His-240 (proton acceptor) is an active-site residue. Residues 276–299 (APEKPVVVRDEENRPQPRMDRDMD) form a disordered region. The segment covering 281–299 (VVVRDEENRPQPRMDRDMD) has biased composition (basic and acidic residues). 327–328 (NT) is an NADP(+) binding site.

The protein belongs to the aspartate-semialdehyde dehydrogenase family. As to quaternary structure, homodimer.

It carries out the reaction L-aspartate 4-semialdehyde + phosphate + NADP(+) = 4-phospho-L-aspartate + NADPH + H(+). It participates in amino-acid biosynthesis; L-lysine biosynthesis via DAP pathway; (S)-tetrahydrodipicolinate from L-aspartate: step 2/4. The protein operates within amino-acid biosynthesis; L-methionine biosynthesis via de novo pathway; L-homoserine from L-aspartate: step 2/3. Its pathway is amino-acid biosynthesis; L-threonine biosynthesis; L-threonine from L-aspartate: step 2/5. Catalyzes the NADPH-dependent formation of L-aspartate-semialdehyde (L-ASA) by the reductive dephosphorylation of L-aspartyl-4-phosphate. In Methanothermobacter thermautotrophicus (strain ATCC 29096 / DSM 1053 / JCM 10044 / NBRC 100330 / Delta H) (Methanobacterium thermoautotrophicum), this protein is Aspartate-semialdehyde dehydrogenase.